Consider the following 328-residue polypeptide: Malate dehydrogenase (328 aa).

12–18 lines the NAD(+) pocket; sequence GAAGQIG. Residues arginine 95 and arginine 101 each coordinate substrate. NAD(+) is bound by residues asparagine 108, glutamine 115, and 132–134; that span reads VGN. Substrate is bound by residues asparagine 134 and arginine 165. Histidine 190 acts as the Proton acceptor in catalysis.

This sequence belongs to the LDH/MDH superfamily. MDH type 2 family.

The catalysed reaction is (S)-malate + NAD(+) = oxaloacetate + NADH + H(+). Functionally, catalyzes the reversible oxidation of malate to oxaloacetate. The protein is Malate dehydrogenase of Acidovorax ebreus (strain TPSY) (Diaphorobacter sp. (strain TPSY)).